Here is a 143-residue protein sequence, read N- to C-terminus: ATP synthase subunit b' (143 aa).

Residues 6–26 (ATLPVMALQFILLAVILNAVF) traverse the membrane as a helical segment.

This sequence belongs to the ATPase B chain family. F-type ATPases have 2 components, F(1) - the catalytic core - and F(0) - the membrane proton channel. F(1) has five subunits: alpha(3), beta(3), gamma(1), delta(1), epsilon(1). F(0) has four main subunits: a(1), b(1), b'(1) and c(10-14). The alpha and beta chains form an alternating ring which encloses part of the gamma chain. F(1) is attached to F(0) by a central stalk formed by the gamma and epsilon chains, while a peripheral stalk is formed by the delta, b and b' chains.

The protein resides in the cellular thylakoid membrane. F(1)F(0) ATP synthase produces ATP from ADP in the presence of a proton or sodium gradient. F-type ATPases consist of two structural domains, F(1) containing the extramembraneous catalytic core and F(0) containing the membrane proton channel, linked together by a central stalk and a peripheral stalk. During catalysis, ATP synthesis in the catalytic domain of F(1) is coupled via a rotary mechanism of the central stalk subunits to proton translocation. Functionally, component of the F(0) channel, it forms part of the peripheral stalk, linking F(1) to F(0). The b'-subunit is a diverged and duplicated form of b found in plants and photosynthetic bacteria. In Microcystis aeruginosa (strain NIES-843 / IAM M-2473), this protein is ATP synthase subunit b'.